The chain runs to 422 residues: Signal recognition particle receptor FtsY (422 aa).

Residues proline 39 to arginine 86 form a disordered region. Over residues tyrosine 50–proline 66 the composition is skewed to polar residues. GTP contacts are provided by residues glycine 230–threonine 237, aspartate 312–arginine 316, and threonine 374–aspartate 377.

Belongs to the GTP-binding SRP family. FtsY subfamily. As to quaternary structure, part of the signal recognition particle protein translocation system, which is composed of SRP and FtsY.

It is found in the cell membrane. The protein resides in the cytoplasm. It catalyses the reaction GTP + H2O = GDP + phosphate + H(+). Its function is as follows. Involved in targeting and insertion of nascent membrane proteins into the cytoplasmic membrane. Acts as a receptor for the complex formed by the signal recognition particle (SRP) and the ribosome-nascent chain (RNC). In Mycobacterium bovis (strain ATCC BAA-935 / AF2122/97), this protein is Signal recognition particle receptor FtsY.